The chain runs to 135 residues: Interleukin-4 (135 aa).

Residues M1–G24 form the signal peptide. 3 disulfides stabilise this stretch: C27-C135, C48-C85, and C70-C105. N62 carries N-linked (GlcNAc...) asparagine glycosylation.

The protein belongs to the IL-4/IL-13 family.

It localises to the secreted. Participates in at least several B-cell activation processes as well as of other cell types. It is a costimulator of DNA-synthesis. It induces the expression of class II MHC molecules on resting B-cells. It enhances both secretion and cell surface expression of IgE and IgG1. It also regulates the expression of the low affinity Fc receptor for IgE (CD23) on both lymphocytes and monocytes. Positively regulates IL31RA expression in macrophages. Stimulates autophagy in dendritic cells by interfering with mTORC1 signaling and through the induction of RUFY4. In Boselaphus tragocamelus (Nilgai), this protein is Interleukin-4 (IL4).